Here is a 432-residue protein sequence, read N- to C-terminus: Trigger factor (432 aa).

Residues 161 to 246 (GTRATINFVG…VVKVEARELP (86 aa)) form the PPIase FKBP-type domain.

This sequence belongs to the FKBP-type PPIase family. Tig subfamily.

It is found in the cytoplasm. The catalysed reaction is [protein]-peptidylproline (omega=180) = [protein]-peptidylproline (omega=0). In terms of biological role, involved in protein export. Acts as a chaperone by maintaining the newly synthesized protein in an open conformation. Functions as a peptidyl-prolyl cis-trans isomerase. This Aliivibrio salmonicida (strain LFI1238) (Vibrio salmonicida (strain LFI1238)) protein is Trigger factor.